Consider the following 162-residue polypeptide: Caveolin-2 (162 aa).

The Cytoplasmic portion of the chain corresponds to 1-86; sequence MGLETEKADV…FEISKYVLYK (86 aa). At Y19 the chain carries Phosphotyrosine; by SRC. Phosphoserine occurs at positions 20 and 23. At Y27 the chain carries Phosphotyrosine; by SRC. S36 carries the phosphoserine modification. An intramembrane region (helical) is located at residues 87–107; sequence FLTVFLAIPLAFVAGILFATL. Topologically, residues 108 to 162 are cytoplasmic; the sequence is SCLHIWIIMPFVKTCLMVLPSVQTIWKSVTDVIIAPLCTSVGRSFSSISLRLSQD.

The protein belongs to the caveolin family. As to quaternary structure, monomer or homodimer. Interacts with CAV1; the interaction forms a stable heterooligomeric complex that is required for targeting to lipid rafts and for caveolae formation. Tyrosine phosphorylated forms do not form heterooligomers with the Tyr-19-phosphorylated form existing as a monomer or dimer, and the Tyr-27-form as a monomer only. Interacts (tyrosine phosphorylated form) with the SH2 domain-containing proteins, RASA1, NCK1 and SRC. Interacts (tyrosine phosphorylated form) with INSR, the interaction (Tyr-27-phosphorylated form) is increased on insulin stimulation. Interacts (Tyr-19 phosphorylated form) with MAPK1 (phosphorylated form); the interaction, promoted by insulin, leads to nuclear location and MAPK1 activation. Interacts with STAT3; the interaction is increased on insulin-induced tyrosine phosphorylation leading to STAT activation. Post-translationally, phosphorylated on serine and tyrosine residues. CAV1 promotes phosphorylation on Ser-23 which then targets the complex to the plasma membrane, lipid rafts and caveolae. Phosphorylation on Ser-36 appears to modulate mitosis in endothelial cells. Phosphorylation on both Tyr-19 and Tyr-27 is required for insulin-induced 'Ser-727' phosphorylation of STAT3 and its activation. Phosphorylation on Tyr-19 is required for insulin-induced phosphorylation of MAPK1 and DNA binding of STAT3. Tyrosine phosphorylation is induced by both EGF and insulin (By. similarity).

It is found in the nucleus. It localises to the cytoplasm. The protein localises to the golgi apparatus membrane. Its subcellular location is the cell membrane. The protein resides in the membrane. It is found in the caveola. May act as a scaffolding protein within caveolar membranes. Interacts directly with G-protein alpha subunits and can functionally regulate their activity. Acts as an accessory protein in conjunction with CAV1 in targeting to lipid rafts and driving caveolae formation. The Ser-36 phosphorylated form has a role in modulating mitosis in endothelial cells. Positive regulator of cellular mitogenesis of the MAPK signaling pathway. Required for the insulin-stimulated nuclear translocation and activation of MAPK1 and STAT3, and the subsequent regulation of cell cycle progression. The sequence is that of Caveolin-2 (CAV2) from Otolemur garnettii (Small-eared galago).